The chain runs to 233 residues: Putative peroxiredoxin (233 aa).

One can recognise a Thioredoxin domain in the interval 41 to 200 (AQIGKEAPEF…TIRIVKAIQF (160 aa)). C87 functions as the Cysteine sulfenic acid (-SOH) intermediate in the catalytic mechanism.

This sequence belongs to the peroxiredoxin family. AhpC/Prx1 subfamily. As to quaternary structure, homodimer; disulfide-linked, upon oxidation.

The protein resides in the cell membrane. It carries out the reaction a hydroperoxide + [thioredoxin]-dithiol = an alcohol + [thioredoxin]-disulfide + H2O. In terms of biological role, thiol-specific peroxidase that catalyzes the reduction of hydrogen peroxide and organic hydroperoxides to water and alcohols, respectively. Plays a role in cell protection against oxidative stress by detoxifying peroxides and as sensor of hydrogen peroxide-mediated signaling events. The chain is Putative peroxiredoxin from Entamoeba histolytica (strain ATCC 30459 / HM-1:IMSS / ABRM).